The chain runs to 360 residues: S-adenosylmethionine:tRNA ribosyltransferase-isomerase (360 aa).

Belongs to the QueA family. Monomer.

Its subcellular location is the cytoplasm. The catalysed reaction is 7-aminomethyl-7-carbaguanosine(34) in tRNA + S-adenosyl-L-methionine = epoxyqueuosine(34) in tRNA + adenine + L-methionine + 2 H(+). It participates in tRNA modification; tRNA-queuosine biosynthesis. Transfers and isomerizes the ribose moiety from AdoMet to the 7-aminomethyl group of 7-deazaguanine (preQ1-tRNA) to give epoxyqueuosine (oQ-tRNA). The polypeptide is S-adenosylmethionine:tRNA ribosyltransferase-isomerase (Rhizobium rhizogenes (strain K84 / ATCC BAA-868) (Agrobacterium radiobacter)).